The sequence spans 672 residues: MLHGGDYNPDQWLDRPDILADDIKLMKLSHTNTFSVGIFAWSALEPEEGVYQFEWLDDIFERIHSIGGRVILATPSGARPAWLSQTYPEVLRVNASRVKQLHGGRHNHCLTSKVYREKTRHINRLLAERYGHHPALLMWHISNEYGGDCHCDLCQHAFREWLKSKYDNSLKTLNHAWWTPFWSHTFNDWSQIESPSPIGENGLHGLNLDWRRFVTDQTISFYENEIIPLKELTPDIPITTNFMADTPDLIPYQGLDYSKFAKHVDAISWDAYPVWHNDWESTADLAMKVGFINDLYRSLKQQPFLLMECTPSAVNWHNVNKAKRPGMNLLSSMQMIAHGSDSVLYFQYRKSRGSSEKLHGAVVDHDNSPKNRVFQEVAKVGETLERLSEVVGTKRPAQTAILYDWENHWALEDAQGFAKATKRYPQTLQQHYRTFWEHDIPVDVITKEQDFSPYKLLIVPMLYLISEDTVSRLKAFTADGGTLVMTYISGVVNEHDLTYTGGWHPDLQAIFGVEPLETDTLYPKDRNAVSYRSQIYEMKDYATVIDVKTASVEAVYQEDFYARTPAVTSHEYQQGKAYFIGARLEDQFQRDFYEGLITDLSLSPVFPVRHGKGVSVQARQDQDNDYIFVMNFTEEKQLVTFDQSVKDIMTGDILSGDLTMEKYEVRIVVNTH.

Residue arginine 105 participates in substrate binding. Residue cysteine 109 coordinates Zn(2+). Asparagine 143 is a substrate binding site. The active-site Proton donor is the glutamate 144. Residues cysteine 149, cysteine 151, and cysteine 154 each coordinate Zn(2+). The Nucleophile role is filled by glutamate 308. Substrate-binding positions include tryptophan 316 and 356-359; that span reads EKLH.

The protein belongs to the glycosyl hydrolase 42 family. As to quaternary structure, homotrimer.

The catalysed reaction is Hydrolysis of terminal non-reducing beta-D-galactose residues in beta-D-galactosides.. Inhibited by zinc, cobalt and copper ions. In terms of biological role, involved in galactan degradation. Hydrolyzes galactooligosaccharides released by the endo-beta-1,4-galactanase GanB from galactan. Degrades galactotetraose, galactotriose and galactobiose, generating galactose as the end product. It is unable to use lactose. In vitro, shows maximal activity with o-nitrophenyl-beta-D-galactopyranoside (ONPG) and p-nitrophenyl-beta-D-galactopyranoside (PNPG) as substrates, trace activity with p-nitrophenyl-alpha-L-arabinopyranoside and o-nitrophenyl-beta-D-fucopyranoside as substrates, but no activity with p-nitrophenyl-alpha-D-galactopyranoside, p-nitrophenyl-beta-D-glucopyranoside, o-nitrophenyl-beta-D-xylopyranoside, p-nitrophenyl-beta-D-mannopyranoside or p-nitrophenyl-alpha-L-arabinofuranoside as substrates. This Bacillus subtilis (strain 168) protein is Beta-galactosidase GanA.